The chain runs to 296 residues: Probable lipid kinase YegS-like (296 aa).

In terms of domain architecture, DAGKc spans 1–130; sequence MPHTLLILNG…IDLAQVNGEH (130 aa). ATP is bound by residues Thr-37, 63 to 69, and Thr-92; that span reads GDGTINE. Mg(2+)-binding residues include Leu-212, Asp-215, and Leu-217. The active-site Proton acceptor is the Glu-268.

The protein belongs to the diacylglycerol/lipid kinase family. YegS lipid kinase subfamily. The cofactor is Mg(2+). Ca(2+) is required as a cofactor.

Its subcellular location is the cytoplasm. In terms of biological role, probably phosphorylates lipids; the in vivo substrate is unknown. In Yersinia pseudotuberculosis serotype I (strain IP32953), this protein is Probable lipid kinase YegS-like.